A 204-amino-acid polypeptide reads, in one-letter code: NAD(P)H-quinone oxidoreductase subunit M, chloroplastic (204 aa).

The N-terminal 27 residues, 1–27 (MASTSMSLTRACKVHAVLACSIPSVSS), are a transit peptide targeting the chloroplast.

This sequence belongs to the NDH complex subunit M family. Part of the chloroplast NDH complex, composed of a mixture of chloroplast and nucleus encoded subunits. Component of the NDH subcomplex A, at least composed of ndhH, ndhI, ndhJ, ndhK, ndhL, ndhM, ndhN and ndhO.

It localises to the plastid. The protein localises to the chloroplast thylakoid membrane. The catalysed reaction is a plastoquinone + NADH + (n+1) H(+)(in) = a plastoquinol + NAD(+) + n H(+)(out). It carries out the reaction a plastoquinone + NADPH + (n+1) H(+)(in) = a plastoquinol + NADP(+) + n H(+)(out). Functionally, NDH shuttles electrons from NAD(P)H:plastoquinone, via FMN and iron-sulfur (Fe-S) centers, to quinones in the photosynthetic chain and possibly in a chloroplast respiratory chain. The immediate electron acceptor for the enzyme in this species is believed to be plastoquinone. Couples the redox reaction to proton translocation, and thus conserves the redox energy in a proton gradient. This Physcomitrium patens (Spreading-leaved earth moss) protein is NAD(P)H-quinone oxidoreductase subunit M, chloroplastic.